The primary structure comprises 292 residues: Phosphatidylserine decarboxylase proenzyme (292 aa).

Catalysis depends on charge relay system; for autoendoproteolytic cleavage activity residues aspartate 89, histidine 146, and serine 252. Catalysis depends on serine 252, which acts as the Schiff-base intermediate with substrate; via pyruvic acid; for decarboxylase activity. Serine 252 carries the post-translational modification Pyruvic acid (Ser); by autocatalysis.

Belongs to the phosphatidylserine decarboxylase family. PSD-B subfamily. Prokaryotic type I sub-subfamily. As to quaternary structure, heterodimer of a large membrane-associated beta subunit and a small pyruvoyl-containing alpha subunit. Requires pyruvate as cofactor. Post-translationally, is synthesized initially as an inactive proenzyme. Formation of the active enzyme involves a self-maturation process in which the active site pyruvoyl group is generated from an internal serine residue via an autocatalytic post-translational modification. Two non-identical subunits are generated from the proenzyme in this reaction, and the pyruvate is formed at the N-terminus of the alpha chain, which is derived from the carboxyl end of the proenzyme. The autoendoproteolytic cleavage occurs by a canonical serine protease mechanism, in which the side chain hydroxyl group of the serine supplies its oxygen atom to form the C-terminus of the beta chain, while the remainder of the serine residue undergoes an oxidative deamination to produce ammonia and the pyruvoyl prosthetic group on the alpha chain. During this reaction, the Ser that is part of the protease active site of the proenzyme becomes the pyruvoyl prosthetic group, which constitutes an essential element of the active site of the mature decarboxylase.

Its subcellular location is the cell membrane. It catalyses the reaction a 1,2-diacyl-sn-glycero-3-phospho-L-serine + H(+) = a 1,2-diacyl-sn-glycero-3-phosphoethanolamine + CO2. Its pathway is phospholipid metabolism; phosphatidylethanolamine biosynthesis; phosphatidylethanolamine from CDP-diacylglycerol: step 2/2. In terms of biological role, catalyzes the formation of phosphatidylethanolamine (PtdEtn) from phosphatidylserine (PtdSer). The chain is Phosphatidylserine decarboxylase proenzyme from Shewanella baltica (strain OS223).